Reading from the N-terminus, the 234-residue chain is Peptidyl-tRNA hydrolase (234 aa).

Tyrosine 14 contributes to the tRNA binding site. The Proton acceptor role is filled by histidine 19. Phenylalanine 64, asparagine 66, and asparagine 112 together coordinate tRNA. Residues 187–234 (TGTKADEEKPKPAKSHIHQARNGVQPKKLPETGPMAEMLKKMFGPKKD) are disordered.

It belongs to the PTH family. In terms of assembly, monomer.

It localises to the cytoplasm. The catalysed reaction is an N-acyl-L-alpha-aminoacyl-tRNA + H2O = an N-acyl-L-amino acid + a tRNA + H(+). Hydrolyzes ribosome-free peptidyl-tRNAs (with 1 or more amino acids incorporated), which drop off the ribosome during protein synthesis, or as a result of ribosome stalling. Functionally, catalyzes the release of premature peptidyl moieties from peptidyl-tRNA molecules trapped in stalled 50S ribosomal subunits, and thus maintains levels of free tRNAs and 50S ribosomes. In Allorhizobium ampelinum (strain ATCC BAA-846 / DSM 112012 / S4) (Agrobacterium vitis (strain S4)), this protein is Peptidyl-tRNA hydrolase.